A 564-amino-acid chain; its full sequence is MLAGVLLLQSWLKANYPQVQFGSYGVQEGEFYLDFKVEKSFSIKEFEQLEQDLNAYFNQLNNVVQTKIDKTKSLKFFQADPFTTTLIESIESNSLVVTTVNEQTFWVHDLVLPLPKQGFVKLLNVSANYFLGDPTKPQLQRLVGIFAASKEQLKSLIAANEQKYQNDHRAIGKRLEIFTFDPLVGAGFPIWLEKGAVLKKIIGDFVHYQQLMFGFKTVSSPVLANLELYKISGHYVHYSEDMFPSVKLENQMMMLRPMTCPHHCLIFKHKRRSYKELPQRFCEDSILHRFEASGGLTGLERVRCMTLLDNHIFCRTDQIKAEIKNAFKLIQTVNNKFGFSFDRIDLALHDPNNKAKFIDNDQLWANSESQIESVFKELNVPYKIDVGAAAFYGPKIDFQFKTALNKMITIATIQLDFLLPERFELRYFDEQSNAQTPVIIHVGIVGTYERFIAALLEKTHGNLPLWMAPVQVVVIPVNIDKHEKAAKKLYQKLLKENIRVSLDESEDRLGKKVRTAIVNKIPLQIIVGDKEMQDLTRITCRGFKGEKVQKLYWANFVKKVRKDG.

Positions 167–464 (DHRAIGKRLE…LLEKTHGNLP (298 aa)) are catalytic. Residues Cys-260, His-311, and His-441 each coordinate Zn(2+).

Belongs to the class-II aminoacyl-tRNA synthetase family. In terms of assembly, homodimer. Requires Zn(2+) as cofactor.

It is found in the cytoplasm. It carries out the reaction tRNA(Thr) + L-threonine + ATP = L-threonyl-tRNA(Thr) + AMP + diphosphate + H(+). Its function is as follows. Catalyzes the attachment of threonine to tRNA(Thr) in a two-step reaction: L-threonine is first activated by ATP to form Thr-AMP and then transferred to the acceptor end of tRNA(Thr). Also edits incorrectly charged L-seryl-tRNA(Thr). This Mycoplasma pneumoniae (strain ATCC 29342 / M129 / Subtype 1) (Mycoplasmoides pneumoniae) protein is Threonine--tRNA ligase.